We begin with the raw amino-acid sequence, 1794 residues long: Non-reducing polyketide synthase nscA (1794 aa).

The segment at D19 to H256 is N-terminal acylcarrier protein transacylase domain (SAT). The 434-residue stretch at A389–D822 folds into the Ketosynthase family 3 (KS3) domain. The segment covering D428–G440 has biased composition (basic and acidic residues). The disordered stretch occupies residues D428–T448. Residues C562, H697, and H740 each act as for beta-ketoacyl synthase activity in the active site. A malonyl-CoA:ACP transacylase (MAT) domain region spans residues T927–E1230. The segment at T1314–P1633 is product template (PT) domain. The N-terminal hotdog fold stretch occupies residues H1318–A1454. In terms of domain architecture, PKS/mFAS DH spans H1318 to D1628. The active-site Proton acceptor; for dehydratase activity is H1350. A C-terminal hotdog fold region spans residues A1482–D1628. The Proton donor; for dehydratase activity role is filled by D1539. The segment at S1637–D1719 is disordered. The segment covering Q1644–K1655 has biased composition (polar residues). Positions S1717–C1794 constitute a Carrier domain. O-(pantetheine 4'-phosphoryl)serine is present on S1754.

It depends on pantetheine 4'-phosphate as a cofactor.

Its pathway is secondary metabolite biosynthesis. Its function is as follows. Non-reducing polyketide synthase; part of the gene cluster that mediates the biosynthesis of neosartoricin, a prenylated anthracenone that exhibits T-cell antiproliferative activity, suggestive of a physiological role as an immunosuppressive agent. The non-reducing polyketide synthase nscA probably synthesizes and cyclizes the decaketide backbone. The hydrolase nscB then mediates the product release through hydrolysis followed by spontaneous decarboxylation. The prenyltransferase nscD catalyzes the addition of the dimethylallyl group to the aromatic C5. The FAD-dependent monooxygenase nscC is then responsible for the stereospecific hydroxylation at C2. There is no gene encoding O-acetyltransferase in the nsc gene cluster; thus, the last step of 2-O-acetylation leading to neosartoricin may be catalyzed by an unidentified O-acetyltransferase. The protein is Non-reducing polyketide synthase nscA of Aspergillus fumigatus (strain ATCC MYA-4609 / CBS 101355 / FGSC A1100 / Af293) (Neosartorya fumigata).